Reading from the N-terminus, the 213-residue chain is ATP phosphoribosyltransferase (213 aa).

Belongs to the ATP phosphoribosyltransferase family. Short subfamily. Heteromultimer composed of HisG and HisZ subunits.

The protein localises to the cytoplasm. It carries out the reaction 1-(5-phospho-beta-D-ribosyl)-ATP + diphosphate = 5-phospho-alpha-D-ribose 1-diphosphate + ATP. Its pathway is amino-acid biosynthesis; L-histidine biosynthesis; L-histidine from 5-phospho-alpha-D-ribose 1-diphosphate: step 1/9. Its function is as follows. Catalyzes the condensation of ATP and 5-phosphoribose 1-diphosphate to form N'-(5'-phosphoribosyl)-ATP (PR-ATP). Has a crucial role in the pathway because the rate of histidine biosynthesis seems to be controlled primarily by regulation of HisG enzymatic activity. In Anoxybacillus flavithermus (strain DSM 21510 / WK1), this protein is ATP phosphoribosyltransferase.